The primary structure comprises 102 residues: Small ribosomal subunit protein uS10 (102 aa).

The protein belongs to the universal ribosomal protein uS10 family. Part of the 30S ribosomal subunit.

Functionally, involved in the binding of tRNA to the ribosomes. This Cenarchaeum symbiosum (strain A) protein is Small ribosomal subunit protein uS10.